The primary structure comprises 339 residues: RNA 3'-terminal phosphate cyclase (339 aa).

Residues aspartate 109 and 286-290 (HLADQ) contribute to the ATP site. Histidine 310 (tele-AMP-histidine intermediate) is an active-site residue.

The protein belongs to the RNA 3'-terminal cyclase family. Type 1 subfamily.

Its subcellular location is the cytoplasm. It catalyses the reaction a 3'-end 3'-phospho-ribonucleotide-RNA + ATP = a 3'-end 2',3'-cyclophospho-ribonucleotide-RNA + AMP + diphosphate. In terms of biological role, catalyzes the conversion of 3'-phosphate to a 2',3'-cyclic phosphodiester at the end of RNA. The mechanism of action of the enzyme occurs in 3 steps: (A) adenylation of the enzyme by ATP; (B) transfer of adenylate to an RNA-N3'P to produce RNA-N3'PP5'A; (C) and attack of the adjacent 2'-hydroxyl on the 3'-phosphorus in the diester linkage to produce the cyclic end product. The biological role of this enzyme is unknown but it is likely to function in some aspects of cellular RNA processing. The sequence is that of RNA 3'-terminal phosphate cyclase from Halobacterium salinarum (strain ATCC 29341 / DSM 671 / R1).